The primary structure comprises 470 residues: 3-isopropylmalate dehydratase large subunit (470 aa).

[4Fe-4S] cluster-binding residues include C349, C410, and C413.

It belongs to the aconitase/IPM isomerase family. LeuC type 1 subfamily. As to quaternary structure, heterodimer of LeuC and LeuD. [4Fe-4S] cluster serves as cofactor.

It catalyses the reaction (2R,3S)-3-isopropylmalate = (2S)-2-isopropylmalate. It functions in the pathway amino-acid biosynthesis; L-leucine biosynthesis; L-leucine from 3-methyl-2-oxobutanoate: step 2/4. Functionally, catalyzes the isomerization between 2-isopropylmalate and 3-isopropylmalate, via the formation of 2-isopropylmaleate. The polypeptide is 3-isopropylmalate dehydratase large subunit (Nitrosomonas europaea (strain ATCC 19718 / CIP 103999 / KCTC 2705 / NBRC 14298)).